We begin with the raw amino-acid sequence, 159 residues long: Small ribosomal subunit protein uS7 (159 aa).

Belongs to the universal ribosomal protein uS7 family. As to quaternary structure, part of the 30S ribosomal subunit. Contacts proteins S9 and S11.

Functionally, one of the primary rRNA binding proteins, it binds directly to 16S rRNA where it nucleates assembly of the head domain of the 30S subunit. Is located at the subunit interface close to the decoding center, probably blocks exit of the E-site tRNA. This Rickettsia felis (strain ATCC VR-1525 / URRWXCal2) (Rickettsia azadi) protein is Small ribosomal subunit protein uS7.